The following is a 756-amino-acid chain: Serine/threonine-protein kinase CBK1 (756 aa).

2 disordered regions span residues 1–180 (MYNS…SYSS) and 242–261 (QQQQQQQSQSPVQSGFNNGT). Over residues 23-34 (QQQDQQHQQQQQ) the composition is skewed to low complexity. Residues 53-77 (FSSNYMKEQGSHQSLQEHLQRETGN) are compositionally biased toward polar residues. T109 carries the phosphothreonine modification. Positions 120–180 (HNNNSQSMVQ…TLRSNGSYSS (61 aa)) are enriched in polar residues. The segment covering 242-255 (QQQQQQQSQSPVQS) has biased composition (low complexity). The 321-residue stretch at 352-672 (FHTVKVIGKG…ADEIKSHPFF (321 aa)) folds into the Protein kinase domain. ATP contacts are provided by residues 358–366 (IGKGAFGEV) and K381. Catalysis depends on D475, which acts as the Proton acceptor. The 82-residue stretch at 673–754 (RGVDWNTIRQ…SRFDYLTRKN (82 aa)) folds into the AGC-kinase C-terminal domain. Residues 707-732 (NVPDSPAMAQAAKQREQMTKQGGSAP) form a disordered region.

Belongs to the protein kinase superfamily. STE Ser/Thr protein kinase family. COT1 subfamily. As to quaternary structure, associates with PAG1/TAO3 and interacts with MOB2.

It catalyses the reaction L-seryl-[protein] + ATP = O-phospho-L-seryl-[protein] + ADP + H(+). It carries out the reaction L-threonyl-[protein] + ATP = O-phospho-L-threonyl-[protein] + ADP + H(+). Functionally, protein kinase that seems to play a role in the regulation of cell morphogenesis and proliferation. This Saccharomyces cerevisiae (strain ATCC 204508 / S288c) (Baker's yeast) protein is Serine/threonine-protein kinase CBK1 (CBK1).